The sequence spans 815 residues: MGSDKRVSRTERSGRYGSIIDRDDRDERESRSRRRDSDYKRSSDDRRGDRYDDYRDYDSPERERERRNSDRSEDGYHSDGDYGEHDYRHDISDERESKTIMLRGLPITITESDIREMMESFEGPQPADVRLMKRKTGVSRGFAFVEFYHLQDATSWMEANQKKLVIQGKHIAMHYSNPRPKFEDWLCNKCCLNNFRKRLKCFRCGADKFDSEQEVPPGTTESAQSVDYYCDTIILRNIAPHTVVDSIMTALSPYASLAVNNIRLIKDKQTQQNRGFAFVQLSSAMDASQLLQILQSLHPPLKIDGKTIGVDFAKSARKDLVLPDGNRVSAFSVASTAIAAAQWSSTQSQSGEGGSVDYSYMQPGQDGYTQYTQYSQDYQQFYQQQAGGLESDTSATSGTTVTTTSAAVVSQSPQLYNQTSNPPGSPTEEAQPSTSTSTQAPAASPTGVVPGTKYAVPDTSTYQYDESSGYYYDPTTGLYYDPNSQYYYNSLTQQYLYWDGEKETYVPAAEASSNQQTGLPSTKEGKEKKEKPKSKTAQQIAKDMERWAKSLNKQKENFKNSFQPVNSLREEERRESAAADAGFALFEKKGALAERQQLLPELVRNGDEENPLKRGLVAAYSGDSDNEEELVERLESEEEKLADWKKMACLLCRRQFPNRDALVRHQQLSDLHKQNMDIYRRSRLSEQELEALELREREMKYRDRAAERREKYGIPEPPEPKRKKQFDAGTVNYEQPTKDGIDHSNIGNKMLQAMGWREGSGLGRKCQGITAPIEAQVRLKGAGLGAKGSAYGLSGADSYKDAVRKAMFARFTEME.

The tract at residues Met1–Asp93 is disordered. Phosphoserine occurs at positions 18, 59, 69, 72, and 78. In terms of domain architecture, RRM 1 spans Lys98–Pro178. Residues Lys181–Asp210 form a RanBP2-type zinc finger. The region spanning Asp231–Ser315 is the RRM 2 domain. Positions Val321–Ala809 are required for interaction with U2AF2. Disordered regions lie at residues Gln385 to Ser468 and Ala508 to Gln539. Residues Thr393–Ser410 show a composition bias toward low complexity. The segment covering Gln411–Pro422 has biased composition (polar residues). Residues Pro426 to Thr446 are compositionally biased toward low complexity. At Ser444 the chain carries Phosphoserine. Positions Thr452 to Lys535 are sufficient for interaction with ACIN1, PRPF8, SFRS3, SNRPB, SNRPN, SNRNP70 and SNRNP200. Residues Ser621 and Ser624 each carry the phosphoserine modification. Residues Met647 to His672 form a C2H2-type zinc finger. The G-patch domain occupies His743 to Ser789.

The protein belongs to the RBM5/RBM10 family. Component of the spliceosome A complex (also known as the prespliceosome). Appears to dissociate from the spliceosome upon formation of the spliceosome B complex (also known as the precatalytic spliceosome), in which the heterotrimeric U4/U6.U5 snRNPs are bound. Interacts with U2AF2; this interaction is direct. Also interacts with ACIN1, PRPF8, SFRS3, SNRPB, SNRPN, SNRNP70 and SNRNP200; these interactions may be indirect.

It is found in the nucleus. Functionally, component of the spliceosome A complex. Binds to ssRNA containing the consensus sequence 5'-AGGUAA-3'. Regulates alternative splicing of a number of mRNAs. May modulate splice site pairing after recruitment of the U1 and U2 snRNPs to the 5' and 3' splice sites of the intron. May both positively and negatively regulate apoptosis by regulating the alternative splicing of several genes involved in this process, including FAS and CASP2/caspase-2. In the case of FAS, promotes production of a soluble form of FAS that inhibits apoptosis. In the case of CASP2/caspase-2, promotes production of a catalytically active form of CASP2/Caspase-2 that induces apoptosis. The polypeptide is RNA-binding protein 5 (Rbm5) (Mus musculus (Mouse)).